Consider the following 464-residue polypeptide: uncharacterized protein (464 aa).

A signal peptide spans 1 to 24 (MSRFVPRIIPFYLLLLVAGGTANA).

The protein belongs to the intimin/invasin family.

The protein localises to the periplasm. This is an uncharacterized protein from Escherichia coli (strain K12).